The chain runs to 1693 residues: Putative stoned B-like protein (1693 aa).

Over residues 1–12 the composition is skewed to basic and acidic residues; sequence MSWRDRDFDPHG. 7 disordered regions span residues 1–54, 222–322, 334–371, 383–438, 585–807, 841–869, and 899–1024; these read MSWR…ELPA, NQIP…VEKS, TVEI…PTFS, KEMT…DPNA, GDYH…TSAA, KKME…DEED, and PVKE…FVAD. A compositionally biased stretch (low complexity) spans 26 to 39; that stretch reads SSSERAASMRAMRS. 2 stretches are compositionally biased toward basic and acidic residues: residues 279-301 and 311-322; these read MEDK…KEET and TTEKHQNEVEKS. Positions 360 to 371 are enriched in acidic residues; that stretch reads EEEEDDDLPTFS. Residues 393–412 are compositionally biased toward basic and acidic residues; it reads ENVENEKQEDTHISEGHVEY. Residues 596 to 615 show a composition bias toward polar residues; that stretch reads DENSTSAISGYEQNGASTSL. Positions 632 to 643 are enriched in low complexity; that stretch reads YYQGQEYQQEYY. Positions 684–686 match the DPF 1 motif; the sequence is DPF. A compositionally biased stretch (low complexity) spans 708 to 722; the sequence is SPTPEASSSTGTSAP. Positions 745–760 are enriched in pro residues; that stretch reads PPRPPPAARPPPPRPA. Positions 786–807 are enriched in polar residues; that stretch reads KVSTAVKSTESTLKNLEETSAA. Residues 899 to 913 show a composition bias toward basic and acidic residues; it reads PVKEIKKAPEIRRVD. Short sequence motifs (DPF) lie at residues 1006-1008, 1024-1026, and 1039-1041; these read DPF. The tract at residues 1062-1095 is disordered; it reads ANAENEDDFYNGRQSPTLSTPTPEGGSPISQQRP. Polar residues predominate over residues 1073–1095; that stretch reads GRQSPTLSTPTPEGGSPISQQRP. An SHD domain is found at 1136 to 1283; sequence GWDLMVRHPI…KCKITRTAKP (148 aa). An MHD domain is found at 1287–1606; sequence QDEVQIHCYD…AKYQYKVEID (320 aa). The segment at 1633–1693 is disordered; that stretch reads ELHQPTFNPS…IQIDMKNYGY (61 aa). The span at 1637–1651 shows a compositional bias: polar residues; sequence PTFNPSTQESDTQQG.

Belongs to the Stoned B family.

The protein resides in the cytoplasm. In terms of biological role, potential adapter protein, which may be involved in endocytic vesicle recycling of synaptic vesicles. This chain is Putative stoned B-like protein (unc-41), found in Caenorhabditis elegans.